We begin with the raw amino-acid sequence, 447 residues long: Argininosuccinate lyase (447 aa).

The protein belongs to the lyase 1 family. Argininosuccinate lyase subfamily.

The protein resides in the cytoplasm. It catalyses the reaction 2-(N(omega)-L-arginino)succinate = fumarate + L-arginine. It participates in amino-acid biosynthesis; L-arginine biosynthesis; L-arginine from L-ornithine and carbamoyl phosphate: step 3/3. The sequence is that of Argininosuccinate lyase from Bacteroides fragilis (strain YCH46).